Consider the following 459-residue polypeptide: Elongation factor 1-alpha 4 (459 aa).

One can recognise a tr-type G domain in the interval 5–242; it reads KTHINIVVIG…DCIIPPQRPT (238 aa). The interval 14–21 is G1; that stretch reads GHVDSGKS. Residues 70-74 are G2; the sequence is GITID. A G3 region spans residues 91–94; sequence DAPG. The interval 153–156 is G4; that stretch reads NKMD. The segment at 194-196 is G5; that stretch reads SGF. 2 positions are modified to 5-glutamyl glycerylphosphorylethanolamine: E301 and E374.

It belongs to the TRAFAC class translation factor GTPase superfamily. Classic translation factor GTPase family. EF-Tu/EF-1A subfamily.

Its subcellular location is the cytoplasm. This protein promotes the GTP-dependent binding of aminoacyl-tRNA to the A-site of ribosomes during protein biosynthesis. This Oscheius tipulae protein is Elongation factor 1-alpha 4 (eft-4).